Consider the following 494-residue polypeptide: Alpha-amylase-related protein (494 aa).

Positions 1-20 (MIKFALALTLCLAGASLSLA) are cleaved as a signal peptide. Position 21 is a pyrrolidone carboxylic acid (glutamine 21). A disulfide bridge links cysteine 48 with cysteine 104. Ca(2+) is bound by residues asparagine 118, glutamine 169, and aspartate 178. Cysteine 157 and cysteine 171 are disulfide-bonded. Arginine 206 is a chloride binding site. Aspartate 208 serves as the catalytic Nucleophile. Histidine 212 lines the Ca(2+) pocket. Catalysis depends on glutamate 245, which acts as the Proton donor. Chloride contacts are provided by asparagine 308 and arginine 343. Intrachain disulfides connect cysteine 376/cysteine 382, cysteine 418/cysteine 441, and cysteine 448/cysteine 460.

Belongs to the glycosyl hydrolase 13 family. As to quaternary structure, monomer. It depends on Ca(2+) as a cofactor. Chloride serves as cofactor.

The protein localises to the secreted. It catalyses the reaction Endohydrolysis of (1-&gt;4)-alpha-D-glucosidic linkages in polysaccharides containing three or more (1-&gt;4)-alpha-linked D-glucose units.. The chain is Alpha-amylase-related protein (Amyrel) from Drosophila jambulina (Fruit fly).